A 2036-amino-acid chain; its full sequence is Proline-rich protein 12 (2036 aa).

Disordered regions lie at residues 210–283 (GGGV…RALP), 331–587 (CSPL…GAPG), and 649–697 (APSP…DPQR). A compositionally biased stretch (pro residues) spans 223–240 (QTPPYRPGPPDPPPPPRH). Residues 249–258 (ASSSAAAAAA) are compositionally biased toward low complexity. Phosphoserine occurs at positions 332 and 340. The segment covering 340 to 365 (SPGAGEPSKAGPSGATAGASGRATGP) has biased composition (low complexity). Gly residues-rich tracts occupy residues 367–380 (AAGGGGAGGGGGGY) and 391–400 (TGKGGYGAAA). Composition is skewed to low complexity over residues 411–432 (STATPKCQSLGGPAAAYATGKA) and 441–458 (QAYSPGQPQGLLGPQAYG). The span at 479-490 (PPQPPSGPPPPG) shows a compositional bias: pro residues. 2 stretches are compositionally biased toward polar residues: residues 493-504 (TCQSYSPDQLQG) and 523-537 (GLPTASPSLSYSTGH). Gly residues predominate over residues 543-558 (GHGGGWGPSSLGGGGE). Phosphoserine is present on Ser651. Residues 673–683 (GLGGSGGAGGP) show a composition bias toward gly residues. Thr738 carries the phosphothreonine modification. Disordered stretches follow at residues 758–850 (AFLQ…PLQL), 859–878 (LEPAAPSPRLRPEESLDPPG), 886–925 (ALEPLPPAPGDTGVGPPNSEGKDPAGAYRSPSPQGTKAPR), and 952–1068 (EMFG…CSTK). A compositionally biased stretch (low complexity) spans 802–817 (LPSVLSHAPSPSPSAS). Pro residues predominate over residues 833–847 (PQPPPPPPPPPPPMP). Phosphoserine is present on Ser865. The span at 1037–1052 (AAPPPPPPPPPPPAPA) shows a compositional bias: pro residues. 2 positions are modified to phosphoserine: Ser1077 and Ser1135. Disordered stretches follow at residues 1120–1260 (RLPD…SLTR), 1294–1347 (RHPP…GGAL), 1376–1573 (TLPS…GEGI), and 1668–1840 (HRPP…PGRL). Residues 1182 to 1194 (PTTAGPASASTPT) show a composition bias toward low complexity. Residues 1199-1208 (KPRGRGRGRG) show a composition bias toward basic residues. The span at 1209–1223 (RKAEEAGGTRLEPLK) shows a compositional bias: basic and acidic residues. Lys1223 is modified (N6-acetyllysine). Positions 1239 to 1257 (GTSSGDAISGTDHNSLDSS) are enriched in polar residues. Thr1304 carries the post-translational modification Phosphothreonine. 2 stretches are compositionally biased toward pro residues: residues 1306–1317 (PLSPPKSVPPSV) and 1324–1338 (PQPPATPAVPHPPPS). The residue at position 1308 (Ser1308) is a Phosphoserine. Phosphoserine is present on residues Ser1381, Ser1382, and Ser1387. 2 stretches are compositionally biased toward pro residues: residues 1420 to 1438 (DGPPLAPAAAVPGPPPLPG) and 1458 to 1535 (PPTP…APSP). Positions 1541 to 1553 (PDTRPLHLAKKQE) are enriched in basic and acidic residues. Thr1561 is subject to Phosphothreonine. Ser1568 bears the Phosphoserine mark. Over residues 1691–1703 (APPPKAPAPPPKP) the composition is skewed to pro residues. Basic and acidic residues-rich tracts occupy residues 1704-1715 (ETPEKTTSEKPP) and 1737-1769 (PVEKEKEKEKVTRGERPLRGERATSGRQTRPER). Residue Thr1705 is modified to Phosphothreonine. Residues 1817–1829 (GSSSDSESSPGAP) are compositionally biased toward low complexity. The residue at position 1925 (Ser1925) is a Phosphoserine.

The protein localises to the nucleus. Its subcellular location is the postsynaptic density. It is found in the synapse. The protein resides in the synaptosome. This Homo sapiens (Human) protein is Proline-rich protein 12.